The sequence spans 234 residues: Kappa-casein (234 aa).

An N-terminal signal peptide occupies residues 1–21 (MMKSFLLVVNIVALTLPFLAA). Tandem repeats lie at residues 127–153 (LGKA…QPTV), 154–179 (SAGD…EEAR), and 180–207 (ESPE…PRES). The tract at residues 127-207 (LGKATILSTD…AVPSEEPRES (81 aa)) is 3 X 27 AA tandem repeats. The tract at residues 143 to 234 (QTPVSAAQPT…STGPAIASMA (92 aa)) is disordered. Thr144 carries an O-linked (GalNAc...) threonine glycan. A compositionally biased stretch (polar residues) spans 144–171 (TPVSAAQPTVSAGDTPEVSSQFIDTPDT). Thr158 carries the phosphothreonine modification. A Phosphoserine; alternate modification is found at Ser162. A glycan (O-linked (GalNAc...) serine; alternate) is linked at Ser162.

It belongs to the kappa-casein family. As to expression, mammary gland specific. Secreted in milk.

Its subcellular location is the secreted. In terms of biological role, kappa-casein stabilizes micelle formation, preventing casein precipitation in milk. The sequence is that of Kappa-casein (CSN3) from Cavia porcellus (Guinea pig).